The primary structure comprises 1161 residues: BMP-2-inducible protein kinase (1161 aa).

Positions 1–20 (MKKFSRMPKSEGGSGGGAAG) are disordered. Residue S14 is modified to Phosphoserine. The Protein kinase domain occupies 51 to 316 (VTLEESLAEG…DIFQVSYFAF (266 aa)). Residues 57 to 65 (LAEGGFSTV) and K79 each bind ATP. D180 acts as the Proton acceptor in catalysis. Disordered regions lie at residues 358-439 (TDTI…RVLQ), 453-495 (LQHR…HHHL), 610-630 (TNQK…FGED), and 655-832 (ERAS…TQDL). Positions 361–394 (IGPTETSIAPRQRPKANSATTATPSVLTIQSSAT) are enriched in polar residues. Composition is skewed to low complexity over residues 422–439 (LLGQ…RVLQ) and 460–485 (QQQQ…QQQQ). Polar residues predominate over residues 610–619 (TNQKNISNPP). Residue S689 is modified to Phosphoserine. Composition is skewed to polar residues over residues 697–718 (SSIN…SPAS) and 726–735 (KTSVQGQVQK). Phosphoserine is present on S742. Residues 755–779 (EEEEQDDEEVLQGEQGDFNDDDTEP) are compositionally biased toward acidic residues. The segment covering 798-813 (EKHSSDSDYEQAKAKY) has biased composition (basic and acidic residues). 2 positions are modified to phosphoserine: S817 and S818. Position 834 is a phosphothreonine (T834). S928 carries the phosphoserine modification. The interval 965-1035 (SQQQKVKQRS…RRDSQSSNEF (71 aa)) is disordered. Residues 970–984 (VKQRSLQKLSSRQRR) show a composition bias toward basic residues. Over residues 1000 to 1011 (TPTSTKKTLKPT) the composition is skewed to low complexity. A phosphoserine mark is found at S1029, S1031, S1032, S1039, S1041, S1076, S1107, and S1111. A compositionally biased stretch (polar residues) spans 1137 to 1146 (TPHQSQQSQP). Residues 1137-1161 (TPHQSQQSQPVELDPFGAAPFPSKQ) form a disordered region.

It belongs to the protein kinase superfamily. Ser/Thr protein kinase family. Autophosphorylated.

The protein localises to the nucleus. The enzyme catalyses L-seryl-[protein] + ATP = O-phospho-L-seryl-[protein] + ADP + H(+). The catalysed reaction is L-threonyl-[protein] + ATP = O-phospho-L-threonyl-[protein] + ADP + H(+). May be involved in osteoblast differentiation. This Homo sapiens (Human) protein is BMP-2-inducible protein kinase (BMP2K).